Reading from the N-terminus, the 348-residue chain is Protein RecA (348 aa).

66–73 is an ATP binding site; it reads GPESSGKT.

The protein belongs to the RecA family.

It localises to the cytoplasm. Its function is as follows. Can catalyze the hydrolysis of ATP in the presence of single-stranded DNA, the ATP-dependent uptake of single-stranded DNA by duplex DNA, and the ATP-dependent hybridization of homologous single-stranded DNAs. It interacts with LexA causing its activation and leading to its autocatalytic cleavage. The polypeptide is Protein RecA (Neisseria gonorrhoeae (strain NCCP11945)).